A 157-amino-acid polypeptide reads, in one-letter code: MQDILNIYLSSEESGGLFDFDATLPLMASQFLLIMLILDITFYKPINKVLKDRENYILKTLESATQISEKTKETLARYEEVILKSKKESQQLIDSIKTKTEHDIVNELIQTQNSTREFISKSIKELYRKKEQTLKVLEEDTENLSDKIYLKLINPKQ.

A helical transmembrane segment spans residues 26–43 (LMASQFLLIMLILDITFY).

This sequence belongs to the ATPase B chain family. F-type ATPases have 2 components, F(1) - the catalytic core - and F(0) - the membrane proton channel. F(1) has five subunits: alpha(3), beta(3), gamma(1), delta(1), epsilon(1). F(0) has four main subunits: a(1), b(1), b'(1) and c(10-14). The alpha and beta chains form an alternating ring which encloses part of the gamma chain. F(1) is attached to F(0) by a central stalk formed by the gamma and epsilon chains, while a peripheral stalk is formed by the delta, b and b' chains.

The protein localises to the plastid. Its subcellular location is the chloroplast thylakoid membrane. F(1)F(0) ATP synthase produces ATP from ADP in the presence of a proton or sodium gradient. F-type ATPases consist of two structural domains, F(1) containing the extramembraneous catalytic core and F(0) containing the membrane proton channel, linked together by a central stalk and a peripheral stalk. During catalysis, ATP synthesis in the catalytic domain of F(1) is coupled via a rotary mechanism of the central stalk subunits to proton translocation. In terms of biological role, component of the F(0) channel, it forms part of the peripheral stalk, linking F(1) to F(0). The b'-subunit is a diverged and duplicated form of b found in plants and photosynthetic bacteria. The chain is ATP synthase subunit b', chloroplastic from Cyanidium caldarium (Red alga).